A 326-amino-acid chain; its full sequence is D-threonate 4-phosphate dehydrogenase (326 aa).

2 residues coordinate substrate: His-138 and Thr-139. His-168, His-212, and His-267 together coordinate a divalent metal cation. 3 residues coordinate substrate: Lys-275, Asn-284, and Arg-293.

The protein belongs to the PdxA family. PdxA2 subfamily. Homodimer. A divalent metal cation serves as cofactor.

It catalyses the reaction 4-O-phospho-D-threonate + NAD(+) = dihydroxyacetone phosphate + CO2 + NADH. Functionally, catalyzes the NAD-dependent oxidation and subsequent decarboxylation of D-threonate 4-phosphate to produce dihydroxyacetone phosphate (DHAP). Can also use 4-hydroxy-L-threonine 4-phosphate as substrate. The chain is D-threonate 4-phosphate dehydrogenase from Pectobacterium atrosepticum (strain SCRI 1043 / ATCC BAA-672) (Erwinia carotovora subsp. atroseptica).